We begin with the raw amino-acid sequence, 422 residues long: Tyrosine--tRNA ligase (422 aa).

Residue tyrosine 37 coordinates L-tyrosine. A 'HIGH' region motif is present at residues 42-51; it reads PTEESLHIGH. Positions 175 and 179 each coordinate L-tyrosine. Residues 235 to 239 carry the 'KMSKS' region motif; that stretch reads KFGKT. An ATP-binding site is contributed by lysine 238. One can recognise an S4 RNA-binding domain in the interval 357 to 414; sequence KDLQEALVLTSLAQSRTQAKNMIISNSISINTEKIRKNHIFHEKDKLFGKFTLLSRGK.

It belongs to the class-I aminoacyl-tRNA synthetase family. TyrS type 1 subfamily. As to quaternary structure, homodimer.

It localises to the cytoplasm. The catalysed reaction is tRNA(Tyr) + L-tyrosine + ATP = L-tyrosyl-tRNA(Tyr) + AMP + diphosphate + H(+). In terms of biological role, catalyzes the attachment of tyrosine to tRNA(Tyr) in a two-step reaction: tyrosine is first activated by ATP to form Tyr-AMP and then transferred to the acceptor end of tRNA(Tyr). This Buchnera aphidicola subsp. Acyrthosiphon pisum (strain APS) (Acyrthosiphon pisum symbiotic bacterium) protein is Tyrosine--tRNA ligase.